We begin with the raw amino-acid sequence, 427 residues long: MTYREYRDKVLHFIEEHEKWRSHTINLIASENITSPSVNRAVASGFMHKYAEGWPKQRYYQGCKYVDEVELIGVELFTKLFKSDYADLRPVSGTNANQAVFFGLGQPGDKVIVLHTSHGGHISHMPFGAAGMRGLEVHTWPFDFESFNIDVDKAEKMIRELEPKIVVFGGSLFPFPHPVKELAPVAKEVGAFVVYDAAHVLGLIAGGEFQDPLREGADIMTASTHKTFPGPQGGVILYKKFADDETIAKLQWAIFPGVVSNHHLHHMAGKVITAAEMLEYGEAYAKQIVKNAKALAEALAEEGFKVIGEDQGYTKSHQVIVDVSDLHPAGGGWAAPLLEEAGIILNKNLLPWDPLEKVNEPSGLRIGVQEMTRVGMMEDEMKEIAHFMKRVLIDKEDPKKVRKDVYYFRLEYQKVYYSFDYGLPMKE.

120 to 122 provides a ligand contact to (6S)-5,6,7,8-tetrahydrofolate; sequence GHI. N6-(pyridoxal phosphate)lysine is present on lysine 226.

The protein belongs to the SHMT family. Homodimer. Requires pyridoxal 5'-phosphate as cofactor.

Its subcellular location is the cytoplasm. Its pathway is amino-acid biosynthesis; glycine biosynthesis; glycine from L-serine: step 1/1. In terms of biological role, catalyzes the reversible interconversion of serine and glycine with a modified folate serving as the one-carbon carrier. Also exhibits a pteridine-independent aldolase activity toward beta-hydroxyamino acids, producing glycine and aldehydes, via a retro-aldol mechanism. This Pyrococcus horikoshii (strain ATCC 700860 / DSM 12428 / JCM 9974 / NBRC 100139 / OT-3) protein is Serine hydroxymethyltransferase.